Here is a 729-residue protein sequence, read N- to C-terminus: Polyribonucleotide nucleotidyltransferase (729 aa).

Positions 485 and 491 each coordinate Mg(2+). The 60-residue stretch at 552-611 folds into the KH domain; the sequence is PRITTMKVAEDKIRTIIGKGGATIKGLIESTGVSIDIDDSGVVQLFSPDKMALEEAQKQI. Residues 621 to 689 enclose the S1 motif domain; that stretch reads GQTYQGKVSK…KQGRVKLEWK (69 aa).

This sequence belongs to the polyribonucleotide nucleotidyltransferase family. In terms of assembly, component of the RNA degradosome, which is a multiprotein complex involved in RNA processing and mRNA degradation. Requires Mg(2+) as cofactor.

Its subcellular location is the cytoplasm. The catalysed reaction is RNA(n+1) + phosphate = RNA(n) + a ribonucleoside 5'-diphosphate. In terms of biological role, involved in mRNA degradation. Catalyzes the phosphorolysis of single-stranded polyribonucleotides processively in the 3'- to 5'-direction. This is Polyribonucleotide nucleotidyltransferase from Legionella pneumophila subsp. pneumophila (strain Philadelphia 1 / ATCC 33152 / DSM 7513).